Here is a 259-residue protein sequence, read N- to C-terminus: MLTFVGLGLYDERSVTVAGRDAIRDADRVFAEFYTSRLIGTDIETLEDTLETSIERRDRAGIEQDPEPILEAAESEHVVFCTAGDTMVSTTHADLRLRAADRGIETRIVHGTTAQTAAGSLTGLQNYRFGKATTLPFEDAHGGDGVPDSVVATIEDNRDRDLHTLVYLDIKVDDPHWEESDDTYMTASQAATMLSEPFPDTLGVVVARAGSPDPLVAADTLDELATQTFGDPLHLLVIPGSLHPLEADTLESVAGAALE.

Residues L9, D85, V88, 113-114 (TA), L168, A209, and H234 each bind S-adenosyl-L-methionine.

The protein belongs to the diphthine synthase family. Homodimer.

It catalyses the reaction 2-[(3S)-amino-3-carboxypropyl]-L-histidyl-[translation elongation factor 2] + 3 S-adenosyl-L-methionine = diphthine-[translation elongation factor 2] + 3 S-adenosyl-L-homocysteine + 3 H(+). The protein operates within protein modification; peptidyl-diphthamide biosynthesis. S-adenosyl-L-methionine-dependent methyltransferase that catalyzes the trimethylation of the amino group of the modified target histidine residue in translation elongation factor 2 (EF-2), to form an intermediate called diphthine. The three successive methylation reactions represent the second step of diphthamide biosynthesis. The chain is Diphthine synthase from Haloarcula marismortui (strain ATCC 43049 / DSM 3752 / JCM 8966 / VKM B-1809) (Halobacterium marismortui).